The primary structure comprises 107 residues: U1-lycotoxin-Ls1t (107 aa).

The first 20 residues, 1–20 (MMKVLVVVALLVTLISYSSS), serve as a signal peptide directing secretion. A propeptide spanning residues 21-41 (EGIDDLEADELLSLMANEQTR) is cleaved from the precursor. Intrachain disulfides connect Cys44–Cys59, Cys51–Cys68, Cys58–Cys86, and Cys70–Cys84.

It belongs to the neurotoxin 19 (CSTX) family. 04 (U1-Lctx) subfamily. Expressed by the venom gland.

Its subcellular location is the secreted. The sequence is that of U1-lycotoxin-Ls1t from Lycosa singoriensis (Wolf spider).